The primary structure comprises 130 residues: Small ribosomal subunit protein uS17m (130 aa).

The transit peptide at 1-20 directs the protein to the mitochondrion; the sequence is MSVVRSSVHARWIVGKVIGT.

Belongs to the universal ribosomal protein uS17 family. In terms of assembly, component of the mitochondrial small ribosomal subunit (mt-SSU). Mature mammalian 55S mitochondrial ribosomes consist of a small (28S) and a large (39S) subunit. The 28S small subunit contains a 12S ribosomal RNA (12S mt-rRNA) and 30 different proteins. The 39S large subunit contains a 16S rRNA (16S mt-rRNA), a copy of mitochondrial valine transfer RNA (mt-tRNA(Val)), which plays an integral structural role, and 52 different proteins.

It is found in the mitochondrion. In Homo sapiens (Human), this protein is Small ribosomal subunit protein uS17m (MRPS17).